A 195-amino-acid polypeptide reads, in one-letter code: ATP-dependent Clp protease proteolytic subunit (195 aa).

The active-site Nucleophile is the Ser101. Residue His126 is part of the active site.

This sequence belongs to the peptidase S14 family. Component of the chloroplastic Clp protease core complex.

Its subcellular location is the plastid. It localises to the chloroplast stroma. It carries out the reaction Hydrolysis of proteins to small peptides in the presence of ATP and magnesium. alpha-casein is the usual test substrate. In the absence of ATP, only oligopeptides shorter than five residues are hydrolyzed (such as succinyl-Leu-Tyr-|-NHMec, and Leu-Tyr-Leu-|-Tyr-Trp, in which cleavage of the -Tyr-|-Leu- and -Tyr-|-Trp bonds also occurs).. Functionally, cleaves peptides in various proteins in a process that requires ATP hydrolysis. Has a chymotrypsin-like activity. Plays a major role in the degradation of misfolded proteins. This chain is ATP-dependent Clp protease proteolytic subunit, found in Oltmannsiellopsis viridis (Marine flagellate).